The following is a 441-amino-acid chain: Glutamate--tRNA ligase 2 (441 aa).

The short motif at 8-18 is the 'HIGH' region element; that stretch reads PSPTGYIHVGN. A 'KMSKS' region motif is present at residues 239 to 243; sequence ALSKR. Residue Lys-242 participates in ATP binding.

Belongs to the class-I aminoacyl-tRNA synthetase family. Glutamate--tRNA ligase type 1 subfamily. As to quaternary structure, monomer.

It localises to the cytoplasm. It catalyses the reaction tRNA(Glu) + L-glutamate + ATP = L-glutamyl-tRNA(Glu) + AMP + diphosphate. Catalyzes the attachment of glutamate to tRNA(Glu) in a two-step reaction: glutamate is first activated by ATP to form Glu-AMP and then transferred to the acceptor end of tRNA(Glu). This chain is Glutamate--tRNA ligase 2, found in Ruegeria sp. (strain TM1040) (Silicibacter sp.).